Here is a 274-residue protein sequence, read N- to C-terminus: 2,3,4,5-tetrahydropyridine-2,6-dicarboxylate N-succinyltransferase (274 aa).

Substrate is bound by residues Arg-104 and Asp-141.

It belongs to the transferase hexapeptide repeat family. As to quaternary structure, homotrimer.

It is found in the cytoplasm. It catalyses the reaction (S)-2,3,4,5-tetrahydrodipicolinate + succinyl-CoA + H2O = (S)-2-succinylamino-6-oxoheptanedioate + CoA. It functions in the pathway amino-acid biosynthesis; L-lysine biosynthesis via DAP pathway; LL-2,6-diaminopimelate from (S)-tetrahydrodipicolinate (succinylase route): step 1/3. The protein is 2,3,4,5-tetrahydropyridine-2,6-dicarboxylate N-succinyltransferase of Salmonella arizonae (strain ATCC BAA-731 / CDC346-86 / RSK2980).